Reading from the N-terminus, the 123-residue chain is NADH dehydrogenase [ubiquinone] 1 beta subcomplex subunit 7 (123 aa).

A disordered region spans residues 1–32 (MGTKLSVSLEGASTPETAPRVDRPPTFDPQYG). In terms of domain architecture, CHCH spans 59-102 (RDYCAHHLISLMKCQTQNAPFAGHACDGERGAWDKCEYDDHIMR). 2 consecutive short sequence motifs (cx9C motif) follow at residues 62-72 (CAHHLISLMKC) and 84-94 (CDGERGAWDKC). 2 disulfides stabilise this stretch: cysteine 62-cysteine 94 and cysteine 72-cysteine 84.

It belongs to the complex I NDUFB7 subunit family. In terms of assembly, complex I is composed of 45 different subunits.

The protein localises to the mitochondrion. It localises to the mitochondrion inner membrane. The protein resides in the mitochondrion intermembrane space. Its function is as follows. Accessory subunit of the mitochondrial membrane respiratory chain NADH dehydrogenase (Complex I), that is believed not to be involved in catalysis. Complex I functions in the transfer of electrons from NADH to the respiratory chain. The immediate electron acceptor for the enzyme is believed to be ubiquinone. The protein is NADH dehydrogenase [ubiquinone] 1 beta subcomplex subunit 7 of Caenorhabditis elegans.